The primary structure comprises 118 residues: Small ribosomal subunit protein uS13 (118 aa).

The interval 92–118 (RRGLPVRGQRTKTNARTRKGPRKPIKK) is disordered.

Belongs to the universal ribosomal protein uS13 family. As to quaternary structure, part of the 30S ribosomal subunit. Forms a loose heterodimer with protein S19. Forms two bridges to the 50S subunit in the 70S ribosome.

Located at the top of the head of the 30S subunit, it contacts several helices of the 16S rRNA. In the 70S ribosome it contacts the 23S rRNA (bridge B1a) and protein L5 of the 50S subunit (bridge B1b), connecting the 2 subunits; these bridges are implicated in subunit movement. Contacts the tRNAs in the A and P-sites. The protein is Small ribosomal subunit protein uS13 of Yersinia enterocolitica serotype O:8 / biotype 1B (strain NCTC 13174 / 8081).